The following is a 429-amino-acid chain: tRNA threonylcarbamoyladenosine dehydratase 1 (429 aa).

The next 2 membrane-spanning stretches (helical) occupy residues 3 to 23 and 74 to 94; these read NNTWKLIATTALISVFSTQLA and EQYIVIVGAGEVGSWVCTMLI. Serine 259 bears the Phosphoserine mark. The helical transmembrane segment at 279-299 threads the bilayer; it reads LPELGTMPGIFGLSIATWILT.

Belongs to the HesA/MoeB/ThiF family.

The protein resides in the mitochondrion outer membrane. In terms of biological role, catalyzes the ATP-dependent dehydration of threonylcarbamoyladenosine at position 37 (t(6)A37) to form cyclic t(6)A37 (ct(6)A37) in tRNAs that read codons beginning with adenine. This is tRNA threonylcarbamoyladenosine dehydratase 1 (TCD1) from Saccharomyces cerevisiae (strain ATCC 204508 / S288c) (Baker's yeast).